The sequence spans 853 residues: uncharacterized protein (853 aa).

The span at 1–11 (MAPRKKAVTKK) shows a compositional bias: basic residues. Disordered stretches follow at residues 1–448 (MAPR…SNNV), 485–621 (IAPT…NYFN), and 635–658 (ENYK…NEDE). Residues 20–37 (IEEEIIEEPVDEIVESDG) show a composition bias toward acidic residues. Positions 42–55 (NKKKGKRKSSKKSK) are enriched in basic residues. Acidic residues predominate over residues 60-74 (ENVEEEEQDQEEEEE). A compositionally biased stretch (basic and acidic residues) spans 75–87 (GNKKQKEENDADK). Positions 88-107 (KSRKHDEHRKKRDSKNRRSH) are enriched in basic residues. The segment covering 112 to 121 (ENEEGEEDDE) has biased composition (acidic residues). Residues 124–139 (RKKRRRRKHREKRKKN) show a composition bias toward basic residues. Composition is skewed to acidic residues over residues 143–166 (EEEE…EEDV) and 179–197 (DFDE…EEEQ). Over residues 216 to 228 (DKSKKRKSKKKKR) the composition is skewed to basic residues. 2 stretches are compositionally biased toward acidic residues: residues 232-260 (DDDD…EDVN) and 268-286 (KEEE…DEEK). 3 stretches are compositionally biased toward basic and acidic residues: residues 287 to 361 (QSEN…RDHY), 370 to 400 (SRDH…RDHY), and 411 to 425 (RSRD…DEKS). Composition is skewed to low complexity over residues 426–447 (SSSN…SSNN), 510–613 (NNDN…SNSS), and 636–652 (NYKN…NNNK).

This is an uncharacterized protein from Dictyostelium discoideum (Social amoeba).